Reading from the N-terminus, the 366-residue chain is Cobalt-precorrin-5B C(1)-methyltransferase (366 aa).

Belongs to the CbiD family.

It carries out the reaction Co-precorrin-5B + S-adenosyl-L-methionine = Co-precorrin-6A + S-adenosyl-L-homocysteine. It participates in cofactor biosynthesis; adenosylcobalamin biosynthesis; cob(II)yrinate a,c-diamide from sirohydrochlorin (anaerobic route): step 6/10. Its function is as follows. Catalyzes the methylation of C-1 in cobalt-precorrin-5B to form cobalt-precorrin-6A. This Pseudomonas aeruginosa (strain LESB58) protein is Cobalt-precorrin-5B C(1)-methyltransferase.